Reading from the N-terminus, the 151-residue chain is UPF0178 protein PSHAb0045 (151 aa).

The protein belongs to the UPF0178 family.

The chain is UPF0178 protein PSHAb0045 from Pseudoalteromonas translucida (strain TAC 125).